The primary structure comprises 357 residues: Malonyl CoA reductase (NADP) (357 aa).

NADP(+) is bound at residue threonine 13–valine 16. Residue cysteine 150 is the Acyl-thioester intermediate of the active site. Serine 180–glycine 181 provides a ligand contact to NADP(+). Residue histidine 245 is the Proton acceptor of the active site. Residue asparagine 332–threonine 333 coordinates NADP(+).

This sequence belongs to the aspartate-semialdehyde dehydrogenase family. Homotetramer.

The enzyme catalyses 3-oxopropanoate + NADP(+) + CoA = malonyl-CoA + NADPH + H(+). Catalyzes the reduction of malonyl-CoA to malonate semialdehyde, a key step in the 3-hydroxypropanoate and the 3-hydroxypropanoate/4-hydroxybutyrate cycles. The polypeptide is Malonyl CoA reductase (NADP) (Metallosphaera sedula (strain ATCC 51363 / DSM 5348 / JCM 9185 / NBRC 15509 / TH2)).